The following is a 156-amino-acid chain: Ribosomal RNA large subunit methyltransferase H (156 aa).

S-adenosyl-L-methionine is bound by residues leucine 73, glycine 104, and 123 to 128 (ISSMTL).

Belongs to the RNA methyltransferase RlmH family. Homodimer.

The protein resides in the cytoplasm. It catalyses the reaction pseudouridine(1915) in 23S rRNA + S-adenosyl-L-methionine = N(3)-methylpseudouridine(1915) in 23S rRNA + S-adenosyl-L-homocysteine + H(+). In terms of biological role, specifically methylates the pseudouridine at position 1915 (m3Psi1915) in 23S rRNA. The polypeptide is Ribosomal RNA large subunit methyltransferase H (Burkholderia multivorans (strain ATCC 17616 / 249)).